Reading from the N-terminus, the 557-residue chain is Formate--tetrahydrofolate ligase 2 (557 aa).

66-73 (TPAGEGKT) contacts ATP.

The protein belongs to the formate--tetrahydrofolate ligase family.

It catalyses the reaction (6S)-5,6,7,8-tetrahydrofolate + formate + ATP = (6R)-10-formyltetrahydrofolate + ADP + phosphate. It participates in one-carbon metabolism; tetrahydrofolate interconversion. The sequence is that of Formate--tetrahydrofolate ligase 2 from Streptococcus pyogenes serotype M4 (strain MGAS10750).